Consider the following 787-residue polypeptide: Protein smoothened (787 aa).

Positions 1–27 are cleaved as a signal peptide; that stretch reads MAAARPARGPELPLLGLLLLLLLGDPG. At 28–233 the chain is on the extracellular side; it reads RGAASSGNAT…EAEHQDMHSY (206 aa). A disordered region spans residues 30–60; sequence AASSGNATGPGPRSAGGSARRSAAVTGPPPP. A glycan (N-linked (GlcNAc...) asparagine) is linked at N35. Low complexity predominate over residues 38-53; that stretch reads GPGPRSAGGSARRSAA. 5 cysteine pairs are disulfide-bonded: C64–C178, C70–C134, C78–C127, C118–C154, and C147–C169. The region spanning 65–181 is the FZ domain; the sequence is GRAAPCEPLR…DRFPEGCTNE (117 aa). D95 provides a ligand contact to cholesterol. An N-linked (GlcNAc...) asparagine glycan is attached at N188. Disulfide bonds link C193-C213 and C217-C295. Residues 234-254 traverse the membrane as a helical segment; it reads IAAFGAVTGLCTLFTLATFVA. Over 255–262 the chain is Cytoplasmic; that stretch reads DWRNSNRY. A helical transmembrane segment spans residues 263–283; that stretch reads PAVILFYVNACFFVGSIGWLA. Over 284–314 the chain is Extracellular; that stretch reads QFMDGARREIVCRADGTMRLGEPTSNETLSC. N309 carries N-linked (GlcNAc...) asparagine glycosylation. A disulfide bond links C314 and C390. The chain crosses the membrane as a helical span at residues 315 to 335; it reads VIIFVIVYYALMAGVVWFVVL. At 336–358 the chain is on the cytoplasmic side; that stretch reads TYAWHTSFKALGTTYQPLSGKTS. The helical transmembrane segment at 359–379 threads the bilayer; it reads YFHLLTWSLPFVLTVAILAVA. Over 380–402 the chain is Extracellular; sequence QVDGDSVSGICFVGYKNYRYRAG. Y394 is a binding site for cholesterol. A helical transmembrane segment spans residues 403-423; it reads FVLAPIGLVLIVGGYFLIRGV. Topologically, residues 424-451 are cytoplasmic; it reads MTLFSIKSNHPGLLSEKAASKINETMLR. The helical transmembrane segment at 452–472 threads the bilayer; that stretch reads LGIFGFLAFGFVLITFSCHFY. Residues 473 to 524 lie on the Extracellular side of the membrane; that stretch reads DFFNQAEWERSFRDYVLCQANVTIGLPTKQPIPDCEIKNRPSLLVEKINLFA. A disulfide bond links C490 and C507. The chain crosses the membrane as a helical span at residues 525–545; the sequence is MFGTGIAMSTWVWTKATLLIW. The interaction with BBS5 and BBS7 stretch occupies residues 538 to 569; the sequence is TKATLLIWRRTWCRLTGQSDDEPKRIKKSKMI. Topologically, residues 546–787 are cytoplasmic; the sequence is RRTWCRLTGQ…TELMDADSDF (242 aa). Residues S556, S574, and S590 each carry the phosphoserine modification. Residues 570–653 are required for interaction with PRKACA; the sequence is AKAFSKRHEL…TPVPPEEQAN (84 aa). Positions 581 to 593 are interaction with DLG5; it reads QNPGQELSFSMHT. Position 593 is a phosphothreonine (T593). S595 and S638 each carry phosphoserine. T640 and T644 each carry phosphothreonine. Residue S662 is modified to Phosphoserine. The segment at 667-704 is disordered; the sequence is KRLGRKKKRRKRKKEVCPLAPPPELHPPAPAPSTIPRL. Basic residues predominate over residues 668–680; it reads RLGRKKKRRKRKK. The segment covering 685 to 699 has biased composition (pro residues); it reads LAPPPELHPPAPAPS.

Belongs to the G-protein coupled receptor Fz/Smo family. As to quaternary structure, homodimer. Interacts (via C-terminus) with protein kinase A catalytic subunit PRKACA; interacts with free PRKACA subunits and the interaction leads to sequestration of PRKACA at the membrane, preventing PRKACA-mediated phosphorylation of GLI transcription factors. Interacts with ARRB2. Interacts with KIF7. Interacts with BBS5 and BBS7; the interactions are indicative for the association of SMO with the BBsome complex to facilitate ciliary localization of SMO. Interacts with DLG5 and SDCBP. Interacts with GAS8/DRC4. In terms of processing, phosphorylation by GRK kinases is required for interaction with protein kinase A catalytic subunit PRKACA.

It localises to the cell membrane. Its subcellular location is the cell projection. It is found in the cilium. Its function is as follows. G protein-coupled receptor which associates with the patched protein (PTCH) to transduce hedgehog protein signaling. Binding of sonic hedgehog (SHH) to its receptor patched prevents inhibition of smoothened (SMO) by patched. When active, SMO binds to and sequesters protein kinase A catalytic subunit PRKACA at the cell membrane, preventing PRKACA-mediated phosphorylation of GLI transcription factors which releases the GLI proteins from PRKACA-mediated inhibition and allows for transcriptional activation of hedgehog pathway target genes. Required for the accumulation of KIF7, GLI2 and GLI3 in the cilia. Interacts with DLG5 at the ciliary base to induce the accumulation of KIF7 and GLI2 at the ciliary tip for GLI2 activation. The protein is Protein smoothened (SMO) of Homo sapiens (Human).